A 333-amino-acid chain; its full sequence is Protein FLAP1 homolog A (333 aa).

Residues 26-46 traverse the membrane as a helical segment; the sequence is VVIIFVLAFTLVFTPTFEAEA. The tract at residues 53–74 is disordered; sequence IGGGSFRAPSAPSRSYSGPSGG. Residues 58–70 show a composition bias toward low complexity; sequence FRAPSAPSRSYSG. 2 consecutive transmembrane segments (helical) span residues 92 to 112 and 261 to 281; these read IIPF…LVMI and GEYI…LPAV.

The protein belongs to the FLAP family.

It is found in the cellular thylakoid membrane. Its subcellular location is the cell inner membrane. Its function is as follows. Essential for photosynthetic growth under fluctuating light by modulating PxcA- and PxcL-dependent intracellular pH regulation via proton transport (e.g. transient pH reduction upon transition from dark to light followed by an increase in the light until light-to-dark shift). This Synechocystis sp. (strain ATCC 27184 / PCC 6803 / Kazusa) protein is Protein FLAP1 homolog A.